The chain runs to 437 residues: Pyrophosphate--fructose 6-phosphate 1-phosphotransferase (437 aa).

Diphosphate is bound at residue Gly27. A Mg(2+)-binding site is contributed by Asp122. Residues 147–149, 193–195, Glu261, and 323–326 contribute to the substrate site; these read TID, MGR, and YELR. The active-site Proton acceptor is Asp149.

The protein belongs to the phosphofructokinase type A (PFKA) family. PPi-dependent PFK group II subfamily. Clade 'Short' sub-subfamily. Homotetramer. Mg(2+) is required as a cofactor. Requires Mn(2+) as cofactor.

Its subcellular location is the cytoplasm. The catalysed reaction is beta-D-fructose 6-phosphate + diphosphate = beta-D-fructose 1,6-bisphosphate + phosphate + H(+). The protein operates within carbohydrate degradation; glycolysis; D-glyceraldehyde 3-phosphate and glycerone phosphate from D-glucose: step 3/4. Its activity is regulated as follows. Activated by AMP. Probably promotes oligomerization of the enzyme. Functionally, catalyzes the phosphorylation of D-fructose 6-phosphate, the first committing step of glycolysis. Uses inorganic phosphate (PPi) as phosphoryl donor instead of ATP like common ATP-dependent phosphofructokinases (ATP-PFKs), which renders the reaction reversible, and can thus function both in glycolysis and gluconeogenesis. Consistently, PPi-PFK can replace the enzymes of both the forward (ATP-PFK) and reverse (fructose-bisphosphatase (FBPase)) reactions. The protein is Pyrophosphate--fructose 6-phosphate 1-phosphotransferase of Naegleria fowleri (Brain eating amoeba).